The sequence spans 342 residues: Methylthioribose-1-phosphate isomerase (342 aa).

Substrate-binding positions include 49–51 (RGA), arginine 86, and glutamine 187. Aspartate 228 acts as the Proton donor in catalysis. 238–239 (NK) is a binding site for substrate.

It belongs to the eIF-2B alpha/beta/delta subunits family. MtnA subfamily.

The catalysed reaction is 5-(methylsulfanyl)-alpha-D-ribose 1-phosphate = 5-(methylsulfanyl)-D-ribulose 1-phosphate. It functions in the pathway amino-acid biosynthesis; L-methionine biosynthesis via salvage pathway; L-methionine from S-methyl-5-thio-alpha-D-ribose 1-phosphate: step 1/6. In terms of biological role, catalyzes the interconversion of methylthioribose-1-phosphate (MTR-1-P) into methylthioribulose-1-phosphate (MTRu-1-P). In Enterobacter sp. (strain 638), this protein is Methylthioribose-1-phosphate isomerase.